A 209-amino-acid polypeptide reads, in one-letter code: ATP-dependent Clp protease proteolytic subunit (209 aa).

The Nucleophile role is filled by S103. H128 is a catalytic residue.

The protein belongs to the peptidase S14 family. Fourteen ClpP subunits assemble into 2 heptameric rings which stack back to back to give a disk-like structure with a central cavity, resembling the structure of eukaryotic proteasomes.

Its subcellular location is the cytoplasm. It carries out the reaction Hydrolysis of proteins to small peptides in the presence of ATP and magnesium. alpha-casein is the usual test substrate. In the absence of ATP, only oligopeptides shorter than five residues are hydrolyzed (such as succinyl-Leu-Tyr-|-NHMec, and Leu-Tyr-Leu-|-Tyr-Trp, in which cleavage of the -Tyr-|-Leu- and -Tyr-|-Trp bonds also occurs).. Its function is as follows. Cleaves peptides in various proteins in a process that requires ATP hydrolysis. Has a chymotrypsin-like activity. Plays a major role in the degradation of misfolded proteins. This is ATP-dependent Clp protease proteolytic subunit from Lawsonia intracellularis (strain PHE/MN1-00).